A 168-amino-acid chain; its full sequence is Photosystem I assembly protein Ycf3 (168 aa).

TPR repeat units lie at residues 35–68 (AFTYYRDGMSAQSEGNYAEALQNYYEAMRLEIDP), 72–105 (SYILYNIGLIHTSNGEHTKALEYYFRALERNPFL), and 120–153 (GEQAIQQGDSEIAEAWFDQAAEYWKQAIALTPGN).

Belongs to the Ycf3 family.

It is found in the plastid. Its subcellular location is the chloroplast thylakoid membrane. Essential for the assembly of the photosystem I (PSI) complex. May act as a chaperone-like factor to guide the assembly of the PSI subunits. This chain is Photosystem I assembly protein Ycf3, found in Nicotiana sylvestris (Wood tobacco).